The sequence spans 364 residues: Valine dehydrogenase (364 aa).

The active site involves K91. 191–197 (GVGKVGH) serves as a coordination point for NAD(+).

This sequence belongs to the Glu/Leu/Phe/Val dehydrogenases family. As to quaternary structure, homodimer.

The protein resides in the cytoplasm. It catalyses the reaction L-valine + NAD(+) + H2O = 3-methyl-2-oxobutanoate + NH4(+) + NADH + H(+). The protein operates within amino-acid degradation; L-valine degradation. Its activity is regulated as follows. Repressed in minimal medium by the presence of glucose and NH4(+), glycerol and NH4(+), or glycerol and asparagine. Its function is as follows. Oxidative deamination of branched-chain amino acids. Oxidizes L-valine and L-alpha-aminobutyric acid efficiently, and L-isoleucine and L-leucine less efficiently. Does not act on D-valine. The catabolism of L-valine is the major source of fatty acid precursors for macrolide biosynthesis and a vital source of antibiotic precursors. Uses NAD; no activity was found with NADP. The chain is Valine dehydrogenase (vdh) from Streptomyces coelicolor (strain ATCC BAA-471 / A3(2) / M145).